Here is a 310-residue protein sequence, read N- to C-terminus: MLNSWPLAKDLQVLVEIVHSGSFSAAAATLGQTPAFVTKRIQILENTLATTLLNRSARGVALTESGQRCYEHALEILTQYQRLVDDVTQIKTRPEGMIRIGCSFGFGRSHIAPAITELMRNYPELQVHFELFDRQIDLVQDNIDLDIRINDEIPDYYIAHLLTKNKRILCAAPEYLQKYPQPQSLQELSRHDCLVTKERDMTHGIWELGNGQEKKSVKVSGHLSSNSGEIVLQWALEGKGIMLRSEWDVLPFLESGKLVRVLPEYAQSANIWAVYREPLYRSMKLRVCVEFLAAWCQQRLGKPDEGYQVM.

The region spanning 6-63 (PLAKDLQVLVEIVHSGSFSAAAATLGQTPAFVTKRIQILENTLATTLLNRSARGVALT) is the HTH lysR-type domain. Positions 23–42 (FSAAAATLGQTPAFVTKRIQ) form a DNA-binding region, H-T-H motif.

This sequence belongs to the LysR transcriptional regulatory family.

Its function is as follows. Positive regulator required for L-tartrate-dependent anaerobic growth on glycerol. Induces expression of the ttdA-ttdB-ygjE operon. The chain is HTH-type transcriptional activator TtdR (ttdR) from Escherichia coli O6:K15:H31 (strain 536 / UPEC).